A 665-amino-acid polypeptide reads, in one-letter code: Glycine--tRNA ligase beta subunit (665 aa).

Belongs to the class-II aminoacyl-tRNA synthetase family. As to quaternary structure, tetramer of two alpha and two beta subunits.

The protein resides in the cytoplasm. It catalyses the reaction tRNA(Gly) + glycine + ATP = glycyl-tRNA(Gly) + AMP + diphosphate. The chain is Glycine--tRNA ligase beta subunit (glyS) from Rickettsia prowazekii (strain Madrid E).